The chain runs to 208 residues: 3-isopropylmalate dehydratase small subunit (208 aa).

The protein belongs to the LeuD family. LeuD type 1 subfamily. Heterodimer of LeuC and LeuD.

It carries out the reaction (2R,3S)-3-isopropylmalate = (2S)-2-isopropylmalate. The protein operates within amino-acid biosynthesis; L-leucine biosynthesis; L-leucine from 3-methyl-2-oxobutanoate: step 2/4. In terms of biological role, catalyzes the isomerization between 2-isopropylmalate and 3-isopropylmalate, via the formation of 2-isopropylmaleate. This is 3-isopropylmalate dehydratase small subunit from Granulibacter bethesdensis (strain ATCC BAA-1260 / CGDNIH1).